Consider the following 976-residue polypeptide: Vacuolar membrane protease (976 aa).

Over 1 to 15 (MKLKSVFRSVLKYRK) the chain is Cytoplasmic. Residues 16-36 (TNLSLLLLITYSIITLLYIFD) traverse the membrane as a helical segment. At 37–359 (HERYKLNLPK…KFFVISAKTL (323 aa)) the chain is on the vacuolar side. N-linked (GlcNAc...) asparagine glycans are attached at residues Asn-96 and Asn-121. Zn(2+) is bound by residues His-156 and Asp-168. An N-linked (GlcNAc...) asparagine glycan is attached at Asn-189. The active-site Proton acceptor is the Glu-200. Glu-201 provides a ligand contact to Zn(2+). Residues Asn-212 and Asn-217 are each glycosylated (N-linked (GlcNAc...) asparagine). Zn(2+) is bound by residues Glu-226 and His-300. A helical transmembrane segment spans residues 360-380 (FYWNCIFLLVSPVVAIGLYLI). At 381-392 (SRDRMTWKSHSW) the chain is on the cytoplasmic side. Residues 393-412 (LSWTRFPLSLAAGIIVQKLF) traverse the membrane as a helical segment. Over 413–428 (SNDIIRSNPLTFSRNY) the chain is Vacuolar. A helical membrane pass occupies residues 429–449 (FWPISAFFTQVIFTSYVLINC). Topologically, residues 450–461 (SNFFFPCADMKS) are cytoplasmic. A helical membrane pass occupies residues 462–482 (LSIIELFIILWTILLFTSKLL). The Vacuolar segment spans residues 483 to 496 (YSSDYRYTGLYPLS). Residues 497 to 517 (IFFLLSTIAAILRLLALALGM) form a helical membrane-spanning segment. The Cytoplasmic segment spans residues 518-627 (RTRKRLGREC…NSLKLEYTDY (110 aa)). Residues 528–610 (RDHHSNYSSH…PLLKGSNSME (83 aa)) are disordered. Polar residues predominate over residues 549-558 (NLEQPQDQFT). A compositionally biased stretch (low complexity) spans 559–570 (SSQDDQASIQDD). Basic and acidic residues predominate over residues 582–601 (NVDEDHGMDSSSQQHDERVP). Residues 628–648 (AWIIQFLLIVPIPSFILFNSV) form a helical membrane-spanning segment. The Vacuolar segment spans residues 649–668 (DVIMDALNHTVQEGSKATFD). Residue Asn-656 is glycosylated (N-linked (GlcNAc...) asparagine). The helical transmembrane segment at 669–689 (VLRFGMVGSILMALPILPFFY) threads the bilayer. Residues 690–692 (KVN) are Cytoplasmic-facing. The helical transmembrane segment at 693–713 (YITISLTALLFLISASKTLLV) threads the bilayer. Residues 714 to 976 (HPFTNSNPLK…LVIVKDAIIL (263 aa)) are Vacuolar-facing. Residues Asn-768, Asn-796, Asn-811, Asn-866, and Asn-937 are each glycosylated (N-linked (GlcNAc...) asparagine).

It belongs to the peptidase M28 family. It depends on Zn(2+) as a cofactor.

The protein localises to the vacuole membrane. May be involved in vacuolar sorting and osmoregulation. The chain is Vacuolar membrane protease from Saccharomyces cerevisiae (strain RM11-1a) (Baker's yeast).